The following is a 149-amino-acid chain: Large ribosomal subunit protein eL24B (149 aa).

Ser-50 is modified (phosphoserine). The interval 96 to 149 (QRPEVRAAARAAALKQRKDKRAASESEKKAIKAKSAASSARGQAIKNAKVAARR) is disordered. The segment covering 116–125 (RAASESEKKA) has biased composition (basic and acidic residues).

The protein belongs to the eukaryotic ribosomal protein eL24 family. As to quaternary structure, component of the large ribosomal subunit (LSU). Mature yeast ribosomes consist of a small (40S) and a large (60S) subunit. The 40S small subunit contains 1 molecule of ribosomal RNA (18S rRNA) and at least 33 different proteins. The large 60S subunit contains 3 rRNA molecules (25S, 5.8S and 5S rRNA) and at least 46 different proteins.

It localises to the cytoplasm. Its function is as follows. Component of the ribosome, a large ribonucleoprotein complex responsible for the synthesis of proteins in the cell. The small ribosomal subunit (SSU) binds messenger RNAs (mRNAs) and translates the encoded message by selecting cognate aminoacyl-transfer RNA (tRNA) molecules. The large subunit (LSU) contains the ribosomal catalytic site termed the peptidyl transferase center (PTC), which catalyzes the formation of peptide bonds, thereby polymerizing the amino acids delivered by tRNAs into a polypeptide chain. The nascent polypeptides leave the ribosome through a tunnel in the LSU and interact with protein factors that function in enzymatic processing, targeting, and the membrane insertion of nascent chains at the exit of the ribosomal tunnel. The sequence is that of Large ribosomal subunit protein eL24B (rpl2402) from Schizosaccharomyces pombe (strain 972 / ATCC 24843) (Fission yeast).